The sequence spans 102 residues: Probable endoribonuclease MazF2 (102 aa).

The protein belongs to the PemK/MazF family. In terms of assembly, forms a complex with cognate antitoxin MazE2.

Functionally, toxic component of a type II toxin-antitoxin (TA) system. Acts as an endoribonuclease. Neutralized by coexpression with cognate antitoxin MazE2. The polypeptide is Probable endoribonuclease MazF2 (mazF2) (Mycobacterium tuberculosis (strain CDC 1551 / Oshkosh)).